The following is a 198-amino-acid chain: Holliday junction resolvase RecU (198 aa).

Residues 1-21 (MVNYPHKLSSQKRQPSLSQPK) form a disordered region. Residues 11–21 (QKRQPSLSQPK) show a composition bias toward polar residues. Residues threonine 81, aspartate 83, glutamate 96, and glutamine 115 each contribute to the Mg(2+) site.

Belongs to the RecU family. Mg(2+) serves as cofactor.

The protein localises to the cytoplasm. The enzyme catalyses Endonucleolytic cleavage at a junction such as a reciprocal single-stranded crossover between two homologous DNA duplexes (Holliday junction).. Functionally, endonuclease that resolves Holliday junction intermediates in genetic recombination. Cleaves mobile four-strand junctions by introducing symmetrical nicks in paired strands. Promotes annealing of linear ssDNA with homologous dsDNA. Required for DNA repair, homologous recombination and chromosome segregation. This Streptococcus pneumoniae (strain ATCC 700669 / Spain 23F-1) protein is Holliday junction resolvase RecU.